The chain runs to 268 residues: Small ribosomal subunit protein eS1 (268 aa).

Residues 1–21 (MAVGKNKGLSKGGKKGGKKKV) form a disordered region.

This sequence belongs to the eukaryotic ribosomal protein eS1 family. As to quaternary structure, component of the small ribosomal subunit. Mature ribosomes consist of a small (40S) and a large (60S) subunit. The 40S subunit contains about 33 different proteins and 1 molecule of RNA (18S). The 60S subunit contains about 49 different proteins and 3 molecules of RNA (28S, 5.8S and 5S).

Its subcellular location is the cytoplasm. In terms of biological role, essential for oogenesis; required for late follicle cell development. In Drosophila erecta (Fruit fly), this protein is Small ribosomal subunit protein eS1.